Here is a 740-residue protein sequence, read N- to C-terminus: DNA ligase (740 aa).

Positions 1 to 20 (MGPGLTLSGMTEQSSLFPAP) are disordered. Residues 56-60 (DAEYD), 105-106 (SI), and E142 each bind NAD(+). K144 acts as the N6-AMP-lysine intermediate in catalysis. NAD(+)-binding residues include R165, E201, K322, and K346. 4 residues coordinate Zn(2+): C471, C474, C489, and C495. Residues 654-740 (AATLPLAGMT…RGAPPNAGGG (87 aa)) form the BRCT domain.

The protein belongs to the NAD-dependent DNA ligase family. LigA subfamily. Requires Mg(2+) as cofactor. It depends on Mn(2+) as a cofactor.

It carries out the reaction NAD(+) + (deoxyribonucleotide)n-3'-hydroxyl + 5'-phospho-(deoxyribonucleotide)m = (deoxyribonucleotide)n+m + AMP + beta-nicotinamide D-nucleotide.. DNA ligase that catalyzes the formation of phosphodiester linkages between 5'-phosphoryl and 3'-hydroxyl groups in double-stranded DNA using NAD as a coenzyme and as the energy source for the reaction. It is essential for DNA replication and repair of damaged DNA. The protein is DNA ligase of Acidovorax ebreus (strain TPSY) (Diaphorobacter sp. (strain TPSY)).